Consider the following 265-residue polypeptide: Membrane steroid-binding protein 2 (265 aa).

A helical transmembrane segment spans residues 63–85 (WAAARSASPVAVIAAVAGAAVVY). Positions 94–116 (PPPPPARPREEPSEEAPPPPEPV) are disordered. Positions 118–217 (VGEITAEELL…SKYVKVGTIK (100 aa)) constitute a Cytochrome b5 heme-binding domain. The steroid-binding stretch occupies residues 120 to 217 (EITAEELLQY…SKYVKVGTIK (98 aa)).

The protein belongs to the cytochrome b5 family. MAPR subfamily.

It localises to the cell membrane. Binds multiple steroid compounds. The sequence is that of Membrane steroid-binding protein 2 from Oryza sativa subsp. japonica (Rice).